A 489-amino-acid chain; its full sequence is Acetylcholine receptor subunit beta (489 aa).

The N-terminal stretch at 1–20 (NSGALLWPLIWGLLLIGTQA) is a signal peptide. Residues 21-235 (LDKEAQLRDK…ITFYLVIQRK (215 aa)) lie on the Extracellular side of the membrane. N-linked (GlcNAc...) asparagine glycans are attached at residues N135 and N161. Residues C148 and C162 are joined by a disulfide bond. 3 consecutive transmembrane segments (helical) span residues 236-260 (PLFY…VFYL), 268-286 (MTLS…LLLA), and 302-323 (YLIF…VLNL). The Cytoplasmic segment spans residues 324–457 (HHRSPNTHHM…WQYVAMVVDR (134 aa)). A helical transmembrane segment spans residues 458–476 (LFLWTFIAFTSLGTLSIFL).

It belongs to the ligand-gated ion channel (TC 1.A.9) family. Acetylcholine receptor (TC 1.A.9.1) subfamily. Beta-1/CHRNB1 sub-subfamily. In terms of assembly, pentamer of two alpha chains, and one each of the beta, delta, and gamma (in immature muscle) or epsilon (in mature muscle) chains.

It localises to the postsynaptic cell membrane. It is found in the cell membrane. It catalyses the reaction K(+)(in) = K(+)(out). The catalysed reaction is Na(+)(in) = Na(+)(out). Its function is as follows. After binding acetylcholine, the AChR responds by an extensive change in conformation that affects all subunits and leads to opening of an ion-conducting channel across the plasma membrane. In Xenopus laevis (African clawed frog), this protein is Acetylcholine receptor subunit beta (chrnb1).